The following is a 208-amino-acid chain: Putative proteasome subunit alpha type-4-B (208 aa).

Belongs to the peptidase T1A family. In terms of assembly, component of the 20S core complex of the 26S proteasome. The 26S proteasome is composed of a core protease (CP), known as the 20S proteasome, capped at one or both ends by the 19S regulatory particle (RP/PA700). The 20S proteasome core is composed of 28 subunits that are arranged in four stacked rings, resulting in a barrel-shaped structure. The two end rings are each formed by seven alpha subunits, and the two central rings are each formed by seven beta subunits. The catalytic chamber with the active sites is on the inside of the barrel.

It localises to the cytoplasm. Its subcellular location is the nucleus. Functionally, the proteasome is a multicatalytic proteinase complex which is characterized by its ability to cleave peptides with Arg, Phe, Tyr, Leu, and Glu adjacent to the leaving group at neutral or slightly basic pH. The proteasome has an ATP-dependent proteolytic activity. The sequence is that of Putative proteasome subunit alpha type-4-B (PAC2) from Arabidopsis thaliana (Mouse-ear cress).